We begin with the raw amino-acid sequence, 573 residues long: MALSKNSNSNSFNKKKVSYISVPSQIINSLSSSSLQSLLVSPKKSSRSTNRFSFSYRNPRIWFFTLFLVSLFGMLKLGFNVDPISLPFSRYPCSTTQQPLSFDGEQNAASHLGLAQEPILSTGSSNSNAIIQLNGGKNETLLTEGDFWKQPDGLGFKPCLGFTSQYRKDSNSILKNRWKYLLVVVSGGMNQQRNQIVDAVVIARILGASLVVPVLQVNVIWGDESEFADIFDLEHFKDVLADDVHIVSSLPSTHVMTRPVEEKRTPLHASPQWIRAHYLKRINRERVLLLRGLDSRLSKDLPSDLQKLRCKVAFQALRFSPRILELGNKLASRMRNQGQYLSLHLRMEKDVWVRTGCLPGLTPEYDEIVNSERERHPELLTGRSNMTYHERKLAGLCPLTALEVTRLLKALEAPKDARIYWAGGEPLGGKEVLEPLTKEFPQFYNKHDLALPGELEPFANKASVMAAIDYIVCEKSDVFIPSHGGNMGHALQGQRAYAGHKKYITPNKRQMLPYFMNSSLPESDFNRIVKDLHRESLGQPELRMSKAGKDVTKHPVPECMCSDRQQQEQQSDA.

Residues 1–60 (MALSKNSNSNSFNKKKVSYISVPSQIINSLSSSSLQSLLVSPKKSSRSTNRFSFSYRNPR) are Cytoplasmic-facing. The helical; Signal-anchor for type II membrane protein transmembrane segment at 61 to 81 (IWFFTLFLVSLFGMLKLGFNV) threads the bilayer. At 82–573 (DPISLPFSRY…RQQQEQQSDA (492 aa)) the chain is on the lumenal side. Residue asparagine 138 is glycosylated (N-linked (GlcNAc...) asparagine). Substrate is bound at residue 344-346 (HLR). Residues asparagine 385 and asparagine 517 are each glycosylated (N-linked (GlcNAc...) asparagine). Basic and acidic residues predominate over residues 547–556 (AGKDVTKHPV). The disordered stretch occupies residues 547-573 (AGKDVTKHPVPECMCSDRQQQEQQSDA). Residues 563-573 (DRQQQEQQSDA) are compositionally biased toward polar residues.

The protein belongs to the glycosyltransferase GT106 family. Interacts with RACK1A. Highly expressed in shoot apical meristem (SAM) and in young vegetative tissues.

The protein resides in the golgi apparatus membrane. The protein operates within glycan metabolism. May play a role in the biosynthesis of matrix polysaccharides and contribute to the biomechanics and development of the plant cell wall. The chain is O-fucosyltransferase 20 from Arabidopsis thaliana (Mouse-ear cress).